Consider the following 127-residue polypeptide: Phospholipase A2 homolog otoconin-22 (127 aa).

An N-linked (GlcNAc...) asparagine glycan is attached at N20. Cystine bridges form between C26-C120, C28-C44, C43-C99, C49-C127, C50-C92, C59-C85, and C78-C90. N113 carries an N-linked (GlcNAc...) asparagine glycan.

It belongs to the phospholipase A2 family. As to quaternary structure, monomer. In terms of tissue distribution, otoconial membrane in the maculae of the saccule and utricle. Otoconia are composites of proteins and inorganic crystals formed in the peripheral portion of the vestibular system of vertebrates. The otoconial membranes contain small crystals of calcium carbonate known as otoliths (ear stones) if there is a single deposit or as otoconia (ear dust) if there are many. Each mineral polymorph of otoconia has a protein unique to that polymorph.

The protein localises to the secreted. Major protein of the aragonitic otoconia. It is unlikely that this protein has phospholipase A2 activity. This Xenopus laevis (African clawed frog) protein is Phospholipase A2 homolog otoconin-22.